The primary structure comprises 293 residues: Meteorin (293 aa).

A signal peptide spans 1 to 23 (MGFPAAALLCALCCGLLAPAARA). 5 cysteine pairs are disulfide-bonded: Cys30/Cys51, Cys82/Cys118, Cys171/Cys242, Cys174/Cys266, and Cys184/Cys288.

It belongs to the meteorin family. As to quaternary structure, monomer.

It localises to the secreted. Involved in both glial cell differentiation and axonal network formation during neurogenesis. Promotes astrocyte differentiation and transforms cerebellar astrocytes into radial glia. Also induces axonal extension in small and intermediate neurons of sensory ganglia by activating nearby satellite glia. This Homo sapiens (Human) protein is Meteorin (METRN).